Reading from the N-terminus, the 410-residue chain is Peptide chain release factor subunit 1 (410 aa).

The protein belongs to the eukaryotic release factor 1 family. In terms of assembly, heterodimer of two subunits, one of which binds GTP.

Its subcellular location is the cytoplasm. Directs the termination of nascent peptide synthesis (translation) in response to the termination codons UAA, UAG and UGA. This Picrophilus torridus (strain ATCC 700027 / DSM 9790 / JCM 10055 / NBRC 100828 / KAW 2/3) protein is Peptide chain release factor subunit 1.